A 651-amino-acid chain; its full sequence is Forkhead box protein K2 (651 aa).

Low complexity predominate over residues 1–13 (MAAAAALSGAGAP). Residues 1–29 (MAAAAALSGAGAPPAGGGAGGGGSPPGGW) form a disordered region. The segment covering 14-26 (PAGGGAGGGGSPP) has biased composition (gly residues). Ser24 is subject to Phosphoserine. Residues 48–119 (VTIGRNSSQG…NGVFVDGVFQ (72 aa)) enclose the FHA domain. The required for interaction with DVL2 and SUDS3 stretch occupies residues 120–162 (RRGAPPLQLPRVCTFRFPSTNIKITFTALSSEKREKQEAPESP). Arg135 carries the post-translational modification Omega-N-methylarginine. Disordered stretches follow at residues 150 to 171 (SEKR…PHIS) and 194 to 251 (TISA…SKPP). Residues Lys152 and Lys155 each participate in a glycyl lysine isopeptide (Lys-Gly) (interchain with G-Cter in SUMO2) cross-link. The segment covering 194-203 (TISAANSCPS) has biased composition (polar residues). Ser230 carries the phosphoserine modification. Residues 233 to 249 (ENEKEASGGDSPKDDSK) are compositionally biased toward basic and acidic residues. The fork-head DNA-binding region spans 249-344 (KPPYSYAQLI…EQAFRKRRPR (96 aa)). Positions 291–309 (KGWQNSIRHNLSLNRYFIK) are DNA-binding; major groove. Positions 301, 302, 304, and 307 each coordinate Mg(2+). 2 DNA-binding; minor groove regions span residues 319–323 (KGSFW) and 339–344 (RKRRPR). A disordered region spans residues 350-399 (RTPLGPLSSRSAPASPNHAGVLSAHSSGAQTPESLSREGSPAPLEPEPGA). Residue Ser364 is modified to Phosphoserine. Residues 373-383 (AHSSGAQTPES) show a composition bias toward polar residues. Residues Ser389, Ser415, and Ser419 each carry the phosphoserine modification. Residue Lys518 forms a Glycyl lysine isopeptide (Lys-Gly) (interchain with G-Cter in SUMO2) linkage. Ser590 is modified (phosphoserine). The span at 601–614 (ASASLPTKRQNGDQ) shows a compositional bias: polar residues. Residues 601–623 (ASASLPTKRQNGDQAEQPELKRV) form a disordered region. Lys624 participates in a covalent cross-link: Glycyl lysine isopeptide (Lys-Gly) (interchain with G-Cter in SUMO2).

In terms of assembly, component of SIN3A-, but not SIN3B-, containing multiprotein complexes. Interacts with DVL1, DVL2 (when phosphorylated) and DVL3; the interaction induces DVL2 nuclear translocation. Interacts with SUDS3. Interacts with BAP1 (when phosphorylated); leading to recruit the PR-DUB complex and repress FOXK2 target genes. Accessory component of the polycomb repressive deubiquitinase (PR-DUB) complex, at least composed of BAP1, one of ASXL1, ASXL2 or (probably) ASXL3 and one of MBD5 or MBD6. The PR-DUB core associates with a number of accessory proteins, including FOXK1, FOXK2, KDM1B, HCFC1 and OGT. Post-translationally, hyperphosphorylated during mitosis by CDK1 and, to a lower extent, CDK2. Phosphorylation at Ser-364 and Ser-419 affects stability by promoting degradation. In terms of tissue distribution, expressed in a wide range of adult brain regions, namely the piriform cortex, the major islands of Calleja and cells lining the lateral ventricles, the bed nucleus of stria terminalis, the paraventricular thalamic nucleus, habenula and all structures of the hippocampus. Also present in the hypothalamus, cerebral cortex and in the Purkinje cell layer in the cerebellum. Additionally expressed in dopamine neurons of the substantia and more sparsely in the ventral tegmental area.

It is found in the nucleus. Its subcellular location is the cytoplasm. Functionally, transcriptional regulator involved in different processes such as glucose metabolism, aerobic glycolysis and autophagy. Recognizes and binds the forkhead DNA sequence motif (5'-GTAAACA-3') and can both act as a transcription activator or repressor, depending on the context. Together with FOXK1, acts as a key regulator of metabolic reprogramming towards aerobic glycolysis, a process in which glucose is converted to lactate in the presence of oxygen. Acts by promoting expression of enzymes for glycolysis (such as hexokinase-2 (HK2), phosphofructokinase, pyruvate kinase (PKLR) and lactate dehydrogenase), while suppressing further oxidation of pyruvate in the mitochondria by up-regulating pyruvate dehydrogenase kinases PDK1 and PDK4. Probably plays a role in gluconeogenesis during overnight fasting, when lactate from white adipose tissue and muscle is the main substrate. Together with FOXK1, acts as a negative regulator of autophagy in skeletal muscle: in response to starvation, enters the nucleus, binds the promoters of autophagy genes and represses their expression, preventing proteolysis of skeletal muscle proteins. In addition to the 5'-GTAAACA-3' DNA motif, also binds the 5'-TGANTCA-3' palindromic DNA motif, and co-associates with JUN/AP-1 to activate transcription. Also able to bind to a minimal DNA heteroduplex containing a G/T-mismatch with 5'-TRT[G/T]NB-3' sequence. Binds to NFAT-like motifs (purine-rich) in the IL2 promoter. Positively regulates WNT/beta-catenin signaling by translocating DVL proteins into the nucleus. Accessory component of the polycomb repressive deubiquitinase (PR-DUB) complex; recruits the PR-DUB complex to specific FOXK2-bound genes. The protein is Forkhead box protein K2 of Mus musculus (Mouse).